The sequence spans 547 residues: Chaperonin GroEL (547 aa).

ATP-binding positions include 30-33, Lys-51, 87-91, Gly-415, and Asp-495; these read TLGP and DGTTT. The interval 525–547 is disordered; it reads PDEKEAGGGAPDMGGMGGMGGMM. Positions 531–547 are enriched in gly residues; sequence GGGAPDMGGMGGMGGMM.

Belongs to the chaperonin (HSP60) family. In terms of assembly, forms a cylinder of 14 subunits composed of two heptameric rings stacked back-to-back. Interacts with the co-chaperonin GroES.

It localises to the cytoplasm. It catalyses the reaction ATP + H2O + a folded polypeptide = ADP + phosphate + an unfolded polypeptide.. Its function is as follows. Together with its co-chaperonin GroES, plays an essential role in assisting protein folding. The GroEL-GroES system forms a nano-cage that allows encapsulation of the non-native substrate proteins and provides a physical environment optimized to promote and accelerate protein folding. In Chromohalobacter salexigens (strain ATCC BAA-138 / DSM 3043 / CIP 106854 / NCIMB 13768 / 1H11), this protein is Chaperonin GroEL.